A 168-amino-acid polypeptide reads, in one-letter code: Ribosome maturation factor RimP (168 aa).

Belongs to the RimP family.

The protein resides in the cytoplasm. Its function is as follows. Required for maturation of 30S ribosomal subunits. The sequence is that of Ribosome maturation factor RimP from Mycoplasma mobile (strain ATCC 43663 / 163K / NCTC 11711) (Mesomycoplasma mobile).